The following is a 101-amino-acid chain: Small ribosomal subunit protein uS14 (101 aa).

The tract at residues 52 to 72 (PRDSSPVRQRRRCRSTGRPRG) is disordered. A compositionally biased stretch (basic residues) spans 59 to 72 (RQRRRCRSTGRPRG).

This sequence belongs to the universal ribosomal protein uS14 family. In terms of assembly, part of the 30S ribosomal subunit. Contacts proteins S3 and S10.

Binds 16S rRNA, required for the assembly of 30S particles and may also be responsible for determining the conformation of the 16S rRNA at the A site. The sequence is that of Small ribosomal subunit protein uS14 from Nitrosococcus oceani (strain ATCC 19707 / BCRC 17464 / JCM 30415 / NCIMB 11848 / C-107).